A 206-amino-acid chain; its full sequence is Large ribosomal subunit protein uL4 (206 aa).

This sequence belongs to the universal ribosomal protein uL4 family. Part of the 50S ribosomal subunit.

In terms of biological role, one of the primary rRNA binding proteins, this protein initially binds near the 5'-end of the 23S rRNA. It is important during the early stages of 50S assembly. It makes multiple contacts with different domains of the 23S rRNA in the assembled 50S subunit and ribosome. Its function is as follows. Forms part of the polypeptide exit tunnel. The chain is Large ribosomal subunit protein uL4 from Methylobacterium radiotolerans (strain ATCC 27329 / DSM 1819 / JCM 2831 / NBRC 15690 / NCIMB 10815 / 0-1).